The chain runs to 444 residues: Elongation factor 1-alpha (444 aa).

The 224-residue stretch at 15–238 (KPHINLAVVG…DSFQPPQRPV (224 aa)) folds into the tr-type G domain. The G1 stretch occupies residues 24–31 (GHVDNGKS). Residue 24-31 (GHVDNGKS) participates in GTP binding. Ser31 provides a ligand contact to Mg(2+). A G2 region spans residues 80–84 (GVTIE). Residues 101–104 (DLPG) form a G3 region. Residues 101–105 (DLPGH) and 163–166 (NKMD) contribute to the GTP site. A G4 region spans residues 163–166 (NKMD). The tract at residues 202–204 (SAI) is G5.

It belongs to the TRAFAC class translation factor GTPase superfamily. Classic translation factor GTPase family. EF-Tu/EF-1A subfamily.

It localises to the cytoplasm. The catalysed reaction is GTP + H2O = GDP + phosphate + H(+). Functionally, GTP hydrolase that promotes the GTP-dependent binding of aminoacyl-tRNA to the A-site of ribosomes during protein biosynthesis. This Pyrobaculum aerophilum (strain ATCC 51768 / DSM 7523 / JCM 9630 / CIP 104966 / NBRC 100827 / IM2) protein is Elongation factor 1-alpha.